The following is a 62-amino-acid chain: Photosystem II reaction center protein Z (62 aa).

The next 2 membrane-spanning stretches (helical) occupy residues Ala8–Ala28 and Phe41–Val61.

This sequence belongs to the PsbZ family. PSII is composed of 1 copy each of membrane proteins PsbA, PsbB, PsbC, PsbD, PsbE, PsbF, PsbH, PsbI, PsbJ, PsbK, PsbL, PsbM, PsbT, PsbY, PsbZ, Psb30/Ycf12, at least 3 peripheral proteins of the oxygen-evolving complex and a large number of cofactors. It forms dimeric complexes.

The protein resides in the plastid. The protein localises to the chloroplast thylakoid membrane. Functionally, may control the interaction of photosystem II (PSII) cores with the light-harvesting antenna, regulates electron flow through the 2 photosystem reaction centers. PSII is a light-driven water plastoquinone oxidoreductase, using light energy to abstract electrons from H(2)O, generating a proton gradient subsequently used for ATP formation. The protein is Photosystem II reaction center protein Z of Selaginella uncinata (Blue spike-moss).